Consider the following 337-residue polypeptide: ATP-dependent 6-phosphofructokinase (337 aa).

Glycine 11 is an ATP binding site. 21–25 (RAVVR) lines the ADP pocket. Residues 72-73 (RY) and 102-105 (GDGS) contribute to the ATP site. Aspartate 103 lines the Mg(2+) pocket. 125–127 (TID) contacts substrate. Catalysis depends on aspartate 127, which acts as the Proton acceptor. Arginine 154 contacts ADP. Residues arginine 162 and 169-171 (MGR) contribute to the substrate site. Residues 185-187 (GAD), lysine 212, and 214-216 (KNH) contribute to the ADP site. Residues glutamate 223, arginine 245, and 251–254 (HILR) contribute to the substrate site.

It belongs to the phosphofructokinase type A (PFKA) family. ATP-dependent PFK group I subfamily. Prokaryotic clade 'B1' sub-subfamily. Homotetramer. The cofactor is Mg(2+).

Its subcellular location is the cytoplasm. It catalyses the reaction beta-D-fructose 6-phosphate + ATP = beta-D-fructose 1,6-bisphosphate + ADP + H(+). The protein operates within carbohydrate degradation; glycolysis; D-glyceraldehyde 3-phosphate and glycerone phosphate from D-glucose: step 3/4. Allosterically activated by ADP and other diphosphonucleosides, and allosterically inhibited by phosphoenolpyruvate. Functionally, catalyzes the phosphorylation of D-fructose 6-phosphate to fructose 1,6-bisphosphate by ATP, the first committing step of glycolysis. This Streptococcus pyogenes serotype M28 (strain MGAS6180) protein is ATP-dependent 6-phosphofructokinase.